Reading from the N-terminus, the 407-residue chain is Serine/threonine transporter SstT (407 aa).

9 helical membrane passes run 12–32 (GNLI…GISS), 42–62 (LGIL…FILI), 81–101 (IIIL…LANF), 141–161 (ALSS…GIAL), 179–199 (VLKI…GLVA), 218–238 (ILLV…IVFF), 245–267 (FPLI…SSAA), 288–308 (ISIP…IAIL), and 330–350 (IIAT…LLLI).

Belongs to the dicarboxylate/amino acid:cation symporter (DAACS) (TC 2.A.23) family.

It is found in the cell inner membrane. The catalysed reaction is L-serine(in) + Na(+)(in) = L-serine(out) + Na(+)(out). The enzyme catalyses L-threonine(in) + Na(+)(in) = L-threonine(out) + Na(+)(out). In terms of biological role, involved in the import of serine and threonine into the cell, with the concomitant import of sodium (symport system). The polypeptide is Serine/threonine transporter SstT (Campylobacter jejuni subsp. jejuni serotype O:23/36 (strain 81-176)).